The sequence spans 613 residues: V-type proton ATPase catalytic subunit A isoform 1 (613 aa).

Gly-240–Thr-247 is an ATP binding site.

This sequence belongs to the ATPase alpha/beta chains family. In terms of assembly, V-ATPase is a heteromultimeric enzyme composed of a peripheral catalytic V1 complex (main components: subunits A, B, C, D, E, and F) attached to an integral membrane V0 proton pore complex (main component: the proteolipid protein).

The catalysed reaction is ATP + H2O + 4 H(+)(in) = ADP + phosphate + 5 H(+)(out). In terms of biological role, catalytic subunit of the peripheral V1 complex of vacuolar ATPase. V-ATPase vacuolar ATPase is responsible for acidifying a variety of intracellular compartments in eukaryotic cells. The chain is V-type proton ATPase catalytic subunit A isoform 1 from Acetabularia acetabulum (Mermaid's wine glass).